The primary structure comprises 1181 residues: Pesticidal crystal protein Cry1Ae (1181 aa).

The protein belongs to the delta endotoxin family.

Promotes colloidosmotic lysis by binding to the midgut epithelial cells of many lepidopteran larvae. The polypeptide is Pesticidal crystal protein Cry1Ae (cry1Ae) (Bacillus thuringiensis subsp. alesti).